A 182-amino-acid chain; its full sequence is Small ribosomal subunit protein uS4c (182 aa).

The interval 13–32 (GLTSKRPRSGSDLKNPLRSG) is disordered. The 62-residue stretch at 82–143 (MRLDNILFRL…KQRSKALIQN (62 aa)) folds into the S4 RNA-binding domain.

It belongs to the universal ribosomal protein uS4 family. As to quaternary structure, part of the 30S ribosomal subunit. Contacts protein S5. The interaction surface between S4 and S5 is involved in control of translational fidelity.

The protein resides in the plastid. It is found in the chloroplast. In terms of biological role, one of the primary rRNA binding proteins, it binds directly to 16S rRNA where it nucleates assembly of the body of the 30S subunit. With S5 and S12 plays an important role in translational accuracy. The chain is Small ribosomal subunit protein uS4c (rps4) from Scadoxus puniceus (Paintbrush lily).